Here is a 930-residue protein sequence, read N- to C-terminus: Dual serine/threonine and tyrosine protein kinase (930 aa).

Positions 383-428 (RKENELYESLMNIANRKQEEMKDMIIETLSNMKEELLEDAANMEFK) form a coiled coil. In terms of domain architecture, Protein kinase spans 653–907 (PKLGRELGRG…PLLGIVQPML (255 aa)). ATP-binding positions include 659-667 (LGRGQYGVV) and Lys-682. The active-site Proton acceptor is the Asp-778.

It belongs to the protein kinase superfamily. Ser/Thr protein kinase family. Widely expressed with the highest expression in brain and ovary.

Its subcellular location is the cytoplasm. The protein resides in the cell membrane. It localises to the apical cell membrane. The protein localises to the basolateral cell membrane. It is found in the cell junction. It carries out the reaction L-seryl-[protein] + ATP = O-phospho-L-seryl-[protein] + ADP + H(+). It catalyses the reaction L-threonyl-[protein] + ATP = O-phospho-L-threonyl-[protein] + ADP + H(+). The catalysed reaction is L-tyrosyl-[protein] + ATP = O-phospho-L-tyrosyl-[protein] + ADP + H(+). May act as a positive regulator of ERK phosphorylation downstream of fibroblast growth factor-receptor activation. May induce both caspase-dependent apoptosis and caspase-independent cell death. In Gallus gallus (Chicken), this protein is Dual serine/threonine and tyrosine protein kinase (DSTYK).